We begin with the raw amino-acid sequence, 105 residues long: uncharacterized protein (105 aa).

This is an uncharacterized protein from Rickettsia conorii (strain ATCC VR-613 / Malish 7).